Reading from the N-terminus, the 498-residue chain is E3 ubiquitin-protein ligase TRIM22 (498 aa).

An RING-type zinc finger spans residues 15 to 60 (CPICLELLTEPLSLDCGHSFCQACITAKIKESVIISRGESSCPVCQ). The segment at 92 to 133 (QKRDVCEHHGKKLQIFCKEDGKVICWVCELSQEHQGHQTFRI) adopts a B box-type zinc-finger fold. Zn(2+)-binding residues include C97, H100, C119, and H125. The stretch at 132–248 (RINEVVKECQ…RRLRGSSVEM (117 aa)) forms a coiled coil. Residues 257 to 275 (KRSESWTLKKPKSVSKKLK) carry the Nuclear localization signal motif. Residues 283–498 (LSGMLQVLKE…VPMTVCPPSS (216 aa)) enclose the B30.2/SPRY domain.

This sequence belongs to the TRIM/RBCC family. Homotrimer. As to quaternary structure, (Microbial infection) Interacts with HIV-1 Gag polyprotein; this interaction seems to reduce gag production or virus budding. In terms of assembly, (Microbial infection) Interacts with EMCV protease 3C; this interaction leads to viral protease ubiquitination. Post-translationally, auto-ubiquitinated. As to expression, strongly expressed in peripheral blood leukocytes, spleen, thymus, and ovary. Expressed at basal levels in other tissues.

The protein localises to the cytoplasm. Its subcellular location is the nucleus. It is found in the nucleus speckle. It localises to the cajal body. It carries out the reaction S-ubiquitinyl-[E2 ubiquitin-conjugating enzyme]-L-cysteine + [acceptor protein]-L-lysine = [E2 ubiquitin-conjugating enzyme]-L-cysteine + N(6)-ubiquitinyl-[acceptor protein]-L-lysine.. The protein operates within protein modification; protein ubiquitination. In terms of biological role, interferon-induced E3 ubiquitin ligase that plays important roles in innate and adaptive immunity. Restricts the replication of many viruses including HIV-1, encephalomyocarditis virus (EMCV), hepatitis B virus (HBV), hepatitis C virus (HCV) or Zika virus (ZIKV). Mechanistically, negatively regulates HCV replication by promoting ubiquitination and subsequent degradation of viral NS5A. Also acts by promoting the degradation of Zika virus NS1 and NS3 proteins through proteasomal degradation. Acts as a suppressor of basal HIV-1 LTR-driven transcription by preventing Sp1 binding to the HIV-1 promoter. Also plays a role in antiviral immunity by co-regulating together with NT5C2 the RIGI/NF-kappa-B pathway by promoting 'Lys-63'-linked ubiquitination of RIGI, while NT5C2 is responsible for 'Lys-48'-linked ubiquitination of RIGI. Participates in adaptive immunity by suppressing the amount of MHC class II protein in a negative feedback manner in order to limit the extent of MHC class II induction. In Homo sapiens (Human), this protein is E3 ubiquitin-protein ligase TRIM22 (TRIM22).